The primary structure comprises 245 residues: DNA polymerase III subunit epsilon (245 aa).

Positions 11 and 13 each coordinate a divalent metal cation. 4 residues coordinate substrate: D11, E13, Q60, and H65. Catalysis depends on H161, which acts as the Proton acceptor. A divalent metal cation is bound at residue D166. Position 166 (D166) interacts with substrate.

The DNA polymerase holoenzyme is a complex that contains 10 different types of subunits. These subunits are organized into 3 functionally essential subassemblies: the pol III core, the beta sliding clamp processivity factor and the clamp-loading complex. The pol III core (subunits alpha,epsilon and theta) contains the polymerase and the 3'-5' exonuclease proofreading activities. The polymerase is tethered to the template via the sliding clamp processivity factor. The clamp-loading complex assembles the beta processivity factor onto the primer template and plays a central role in the organization and communication at the replication fork. This complex contains delta, delta', psi and chi, and copies of either or both of two different DnaX proteins, gamma and tau. The composition of the holoenzyme is, therefore: (alpha,epsilon,theta)[2]-(gamma/tau)[3]-delta,delta', psi,chi-beta[4]. Requires Mg(2+) as cofactor. Mn(2+) is required as a cofactor.

It catalyses the reaction DNA(n) + a 2'-deoxyribonucleoside 5'-triphosphate = DNA(n+1) + diphosphate. DNA polymerase III is a complex, multichain enzyme responsible for most of the replicative synthesis in bacteria. The epsilon subunit contain the editing function and is a proofreading 3'-5' exonuclease. This chain is DNA polymerase III subunit epsilon (dnaQ), found in Buchnera aphidicola subsp. Baizongia pistaciae (strain Bp).